A 172-amino-acid polypeptide reads, in one-letter code: METQRASLCLGRWSLWLLLLGLVVPSASAQALSYREAVLRAVDRLNEQSSEANLYRLLELDQPPKADEDPGTPKPVSFTVKETVCPRPTRQPPELCDFKENGRVKQCVGTVTLNPSIHSLDISCNEIQSVRRRPRPPYLPRPRPPPFFPPRLPPRIPPGFPPRFPPRFPGKR.

Positions 1-29 (METQRASLCLGRWSLWLLLLGLVVPSASA) are cleaved as a signal peptide. Pyrrolidone carboxylic acid is present on Gln-30. Positions 30-130 (QALSYREAVL…DISCNEIQSV (101 aa)) are excised as a propeptide. Residues 61–80 (DQPPKADEDPGTPKPVSFTV) are disordered. 2 cysteine pairs are disulfide-bonded: Cys-85–Cys-96 and Cys-107–Cys-124. The tract at residues 130 to 172 (VRRRPRPPYLPRPRPPPFFPPRLPPRIPPGFPPRFPPRFPGKR) is disordered. Positions 136–172 (PPYLPRPRPPPFFPPRLPPRIPPGFPPRFPPRFPGKR) are enriched in pro residues. Proline amide is present on Pro-169.

The protein belongs to the cathelicidin family. Small intestine and bone marrow.

It is found in the secreted. In terms of biological role, exerts a potent antimicrobial activity against both E.coli and B.megaterium. This chain is Antibacterial protein PR-39 (PR39), found in Sus scrofa (Pig).